Here is a 317-residue protein sequence, read N- to C-terminus: R-spondin-3 (317 aa).

A signal peptide spans 1-20 (MQLQLISIVLILHFMEYTNC). FU repeat units follow at residues 34–86 (SGVS…GFYG), 92–135 (RNDC…GLVP), and 139–183 (KKEC…EFEP). Intrachain disulfides connect Cys41–Cys48, Cys45–Cys54, Cys57–Cys76, Cys80–Cys95, Cys98–Cys105, Cys102–Cys111, Cys114–Cys125, Cys129–Cys189, Cys195–Cys237, Cys206–Cys213, and Cys246–Cys253. Asn184 carries an N-linked (GlcNAc...) asparagine glycan. Positions 194-254 (HCEVSEWSEW…ECFVKKKRCK (61 aa)) constitute a TSP type-1 domain. Residues 251–268 (KRCKPPKGQRRGEKKKRF) show a composition bias toward basic residues. The tract at residues 251–317 (KRCKPPKGQR…RDQSRDAGTV (67 aa)) is disordered. Residues 274–303 (VTAEARRERKREREKETIDREESENRNKTE) show a composition bias toward basic and acidic residues. N-linked (GlcNAc...) asparagine glycosylation occurs at Asn300.

It belongs to the R-spondin family. In terms of assembly, binds heparin.

Its subcellular location is the secreted. Its function is as follows. Activator of the canonical Wnt signaling pathway by acting as a ligand for lgr4-6 receptors, which acts as a key regulator of angiogenesis. Upon binding to lgr4-6 (lgr4, lgr5 or lgr6), lgr4-6 associate with phosphorylated lrp6 and frizzled receptors that are activated by extracellular Wnt receptors, triggering the canonical Wnt signaling pathway to increase expression of target genes. Acts both in the canonical. Wnt/beta-catenin-dependent pathway and in non-canonical Wnt signaling pathway. Acts as a key regulator of angiogenesis by controlling vascular stability and pruning: acts by activating the non-canonical Wnt signaling pathway in endothelial cells. Can also amplify Wnt signaling pathway independently of LGR4-6 receptors, possibly by acting as a direct antagonistic ligand to RNF43 and ZNRF3. This Danio rerio (Zebrafish) protein is R-spondin-3 (rspo3).